The sequence spans 322 residues: Phosphatidylserine decarboxylase proenzyme (322 aa).

Active-site charge relay system; for autoendoproteolytic cleavage activity residues include Asp-90, His-147, and Ser-254. Ser-254 acts as the Schiff-base intermediate with substrate; via pyruvic acid; for decarboxylase activity in catalysis. Ser-254 carries the pyruvic acid (Ser); by autocatalysis modification. The tract at residues 293–322 (PDAEPAPLPAEEIEAEHDASPLVDDKKDQV) is disordered. Positions 308-322 (EHDASPLVDDKKDQV) are enriched in basic and acidic residues.

The protein belongs to the phosphatidylserine decarboxylase family. PSD-B subfamily. Prokaryotic type I sub-subfamily. Heterodimer of a large membrane-associated beta subunit and a small pyruvoyl-containing alpha subunit. It depends on pyruvate as a cofactor. In terms of processing, is synthesized initially as an inactive proenzyme. Formation of the active enzyme involves a self-maturation process in which the active site pyruvoyl group is generated from an internal serine residue via an autocatalytic post-translational modification. Two non-identical subunits are generated from the proenzyme in this reaction, and the pyruvate is formed at the N-terminus of the alpha chain, which is derived from the carboxyl end of the proenzyme. The autoendoproteolytic cleavage occurs by a canonical serine protease mechanism, in which the side chain hydroxyl group of the serine supplies its oxygen atom to form the C-terminus of the beta chain, while the remainder of the serine residue undergoes an oxidative deamination to produce ammonia and the pyruvoyl prosthetic group on the alpha chain. During this reaction, the Ser that is part of the protease active site of the proenzyme becomes the pyruvoyl prosthetic group, which constitutes an essential element of the active site of the mature decarboxylase.

It localises to the cell membrane. The enzyme catalyses a 1,2-diacyl-sn-glycero-3-phospho-L-serine + H(+) = a 1,2-diacyl-sn-glycero-3-phosphoethanolamine + CO2. Its pathway is phospholipid metabolism; phosphatidylethanolamine biosynthesis; phosphatidylethanolamine from CDP-diacylglycerol: step 2/2. In terms of biological role, catalyzes the formation of phosphatidylethanolamine (PtdEtn) from phosphatidylserine (PtdSer). This chain is Phosphatidylserine decarboxylase proenzyme, found in Escherichia coli O139:H28 (strain E24377A / ETEC).